A 198-amino-acid chain; its full sequence is Rac-like GTP-binding protein ARAC3 (198 aa).

GTP-binding positions include 13-21, 31-38, 60-64, and 118-121; these read GDGAVGKTC, FPTDYVPT, DTAGQ, and TKLD. Residues 35–43 carry the Effector region motif; that stretch reads YVPTVFDNF. The S-palmitoyl cysteine moiety is linked to residue Cys158. Cys195 is subject to Cysteine methyl ester. Cys195 is lipidated: S-geranylgeranyl cysteine. The propeptide at 196-198 is removed in mature form; it reads SIL.

The protein belongs to the small GTPase superfamily. Rho family. In terms of assembly, interacts with Rho GDP-dissociation inhibitor 1 and ICR1. Binds to SPK1 when in the inactive GDP-bound form. As to expression, ubiquitous. Preferentially expressed at the tip of root hairs.

The protein localises to the cytoplasm. It localises to the cell membrane. Inactive GDP-bound Rho GTPases reside in the cytosol, are found in a complex with Rho GDP-dissociation inhibitors (Rho GDIs), and are released from the GDI protein in order to translocate to membranes upon activation. Involved in cell polarity control during the actin-dependent tip growth of root hairs, thus regulating root hair length and root hair initiation. Contributes, in a SPK1-dependent manner, to the prevention of cortical microtubules organization into parallel arrays oriented perpendicular to the axis of cell elongation to limit anisotropic cell growth during petal development. SPK1-dependent activation is required for auxin-mediated inhibition of PIN2 internalization during gravitropic responses. The polypeptide is Rac-like GTP-binding protein ARAC3 (Arabidopsis thaliana (Mouse-ear cress)).